Consider the following 866-residue polypeptide: Protein mono-ADP-ribosyltransferase PARP9 (866 aa).

Ser-42 carries the post-translational modification Phosphoserine. 2 consecutive Macro domains span residues 109–298 and 313–492; these read QRVF…ESIL and ASTM…TKRS. A PARP catalytic domain is found at 635 to 853; it reads TNQQEKLDKM…YSSGPGMVSS (219 aa).

It belongs to the ARTD/PARP family. In terms of assembly, forms a stable complex with E3 ligase DTX3L; the interaction is required for PARP9 mediated ADP-ribosylation of ubiquitin. Interacts (via PARP catalytic domain) with DTX3L (via N-terminus). Forms a complex with STAT1 and DTX3L independently of IFNB1 or IFNG-mediated STAT1 'Tyr-701' phosphorylation. Forms a complex with STAT1, DTX3L and histone H2B H2BC9/H2BJ; the interaction is likely to induce H2BC9/H2BJ ubiquitination. Interacts (via N-terminus) with STAT1. Interacts with PARP14 in IFNG-stimulated macrophages; the interaction prevents PARP14-mediated STAT1 and STAT6 ADP-riboslylation. Interacts with PARP1 (when poly-ADP-ribosylated). In terms of processing, ADP-ribosylated by PARP14. Highly expressed in the thymus and intestine. Expressed in macrophages.

Its subcellular location is the cytoplasm. It is found in the cytosol. The protein localises to the nucleus. It catalyses the reaction [protein]-C-terminal glycine + NAD(+) = [protein]-C-terminal O-(ADP-D-ribosyl)-glycine + nicotinamide. Binding to poly(ADP-ribose) does not affect its activity. In terms of biological role, ADP-ribosyltransferase which, in association with E3 ligase DTX3L, plays a role in DNA damage repair and in immune responses including interferon-mediated antiviral defenses. Within the complex, enhances DTX3L E3 ligase activity which is further enhanced by PARP9 binding to poly(ADP-ribose). In addition, positively regulates DTXL3 protein levels. In association with DTX3L and in presence of E1 and E2 enzymes, mediates NAD(+)-dependent mono-ADP-ribosylation of ubiquitin which prevents ubiquitin conjugation to substrates such as histones. During DNA repair, PARP1 recruits PARP9/BAL1-DTX3L complex to DNA damage sites via PARP9 binding to ribosylated PARP1. Subsequent PARP1-dependent PARP9/BAL1-DTX3L-mediated ubiquitination promotes the rapid and specific recruitment of 53BP1/TP53BP1, UIMC1/RAP80, and BRCA1 to DNA damage sites. In response to DNA damage, PARP9-DTX3L complex is required for efficient non-homologous end joining (NHEJ) but the complex function is restrained by PARP9 activity. Dispensable for B-cell receptor (BCR) assembly through V(D)J recombination and class switch recombination (CSR). In macrophages, positively regulates pro-inflammatory cytokines production in response to IFNG stimulation by suppressing PARP14-mediated STAT1 ADP-ribosylation and thus promoting STAT1 phosphorylation. Also suppresses PARP14-mediated STAT6 ADP-ribosylation. This Mus musculus (Mouse) protein is Protein mono-ADP-ribosyltransferase PARP9 (Parp9).